Reading from the N-terminus, the 491-residue chain is Aspartyl/glutamyl-tRNA(Asn/Gln) amidotransferase subunit B (491 aa).

Belongs to the GatB/GatE family. GatB subfamily. Heterotrimer of A, B and C subunits.

It catalyses the reaction L-glutamyl-tRNA(Gln) + L-glutamine + ATP + H2O = L-glutaminyl-tRNA(Gln) + L-glutamate + ADP + phosphate + H(+). The enzyme catalyses L-aspartyl-tRNA(Asn) + L-glutamine + ATP + H2O = L-asparaginyl-tRNA(Asn) + L-glutamate + ADP + phosphate + 2 H(+). In terms of biological role, allows the formation of correctly charged Asn-tRNA(Asn) or Gln-tRNA(Gln) through the transamidation of misacylated Asp-tRNA(Asn) or Glu-tRNA(Gln) in organisms which lack either or both of asparaginyl-tRNA or glutaminyl-tRNA synthetases. The reaction takes place in the presence of glutamine and ATP through an activated phospho-Asp-tRNA(Asn) or phospho-Glu-tRNA(Gln). This chain is Aspartyl/glutamyl-tRNA(Asn/Gln) amidotransferase subunit B, found in Paraburkholderia phymatum (strain DSM 17167 / CIP 108236 / LMG 21445 / STM815) (Burkholderia phymatum).